A 549-amino-acid chain; its full sequence is Zinc finger protein 18 (549 aa).

Residues Arg41–Pro123 enclose the SCAN box domain. Residues Asp211–Arg283 form the KRAB domain. 5 C2H2-type zinc fingers span residues Pro408 to His430, Phe436 to His458, Cys464 to His486, Tyr492 to His514, and Tyr520 to His542.

This sequence belongs to the krueppel C2H2-type zinc-finger protein family.

It is found in the nucleus. In terms of biological role, may be involved in transcriptional regulation. This chain is Zinc finger protein 18 (ZNF18), found in Homo sapiens (Human).